The chain runs to 240 residues: Cysteine-rich venom protein (240 aa).

Residues 1 to 19 (MIAFIVLPILAAVLHQSSG) form the signal peptide. The SCP domain maps to 39 to 166 (DLHNSLRRSV…KYRYFYVCQY (128 aa)). 8 cysteine pairs are disulfide-bonded: Cys75–Cys153, Cys92–Cys167, Cys148–Cys164, Cys186–Cys193, Cys189–Cys198, Cys202–Cys235, Cys211–Cys229, and Cys220–Cys233. Positions 202–235 (CTQENTYSNCNSLVQQSSCQDNNMKTKCPASCFC) constitute a ShKT domain.

This sequence belongs to the CRISP family. Expressed by the venom gland.

It localises to the secreted. Functionally, may block ryanodine receptors (RYR). In Protobothrops mucrosquamatus (Taiwan habu), this protein is Cysteine-rich venom protein.